Consider the following 254-residue polypeptide: Triosephosphate isomerase (254 aa).

12–14 is a binding site for substrate; it reads NWK. Catalysis depends on histidine 99, which acts as the Electrophile. The Proton acceptor role is filled by glutamate 169. Residues glycine 175, serine 214, and 235-236 contribute to the substrate site; that span reads GG.

Belongs to the triosephosphate isomerase family. In terms of assembly, homodimer.

The protein resides in the cytoplasm. It carries out the reaction D-glyceraldehyde 3-phosphate = dihydroxyacetone phosphate. It participates in carbohydrate biosynthesis; gluconeogenesis. The protein operates within carbohydrate degradation; glycolysis; D-glyceraldehyde 3-phosphate from glycerone phosphate: step 1/1. Functionally, involved in the gluconeogenesis. Catalyzes stereospecifically the conversion of dihydroxyacetone phosphate (DHAP) to D-glyceraldehyde-3-phosphate (G3P). This Chelativorans sp. (strain BNC1) protein is Triosephosphate isomerase.